We begin with the raw amino-acid sequence, 476 residues long: Probable cytosol aminopeptidase (476 aa).

The Mn(2+) site is built by Lys242 and Asp247. The active site involves Lys254. Residues Asp265, Asp324, and Glu326 each coordinate Mn(2+). The active site involves Arg328.

The protein belongs to the peptidase M17 family. The cofactor is Mn(2+).

It localises to the cytoplasm. It carries out the reaction Release of an N-terminal amino acid, Xaa-|-Yaa-, in which Xaa is preferably Leu, but may be other amino acids including Pro although not Arg or Lys, and Yaa may be Pro. Amino acid amides and methyl esters are also readily hydrolyzed, but rates on arylamides are exceedingly low.. The enzyme catalyses Release of an N-terminal amino acid, preferentially leucine, but not glutamic or aspartic acids.. Its function is as follows. Presumably involved in the processing and regular turnover of intracellular proteins. Catalyzes the removal of unsubstituted N-terminal amino acids from various peptides. The sequence is that of Probable cytosol aminopeptidase from Treponema denticola (strain ATCC 35405 / DSM 14222 / CIP 103919 / JCM 8153 / KCTC 15104).